The primary structure comprises 93 residues: Large ribosomal subunit protein bL27 (93 aa).

The propeptide occupies 1–9 (MLQLNLQFF). The segment at 14–33 (GVGSTKNGRDSISKRLGAKR) is disordered.

The protein belongs to the bacterial ribosomal protein bL27 family. In terms of processing, the N-terminus is cleaved by ribosomal processing cysteine protease Prp.

The chain is Large ribosomal subunit protein bL27 from Exiguobacterium sp. (strain ATCC BAA-1283 / AT1b).